The chain runs to 239 residues: Prolyl hydroxylase EGLN3 (239 aa).

The beta(2)beta(3) 'finger-like' loop stretch occupies residues 62–73; that stretch reads AGPRAGVSKRHL. Residues 88–104 are required for interaction with ADRB2; it reads CEAINFLLSLIDRLVLY. Residues 116-214 form the Fe2OG dioxygenase domain; that stretch reads ERSKAMVACY…RYAMTVWYFD (99 aa). Residues H135, D137, and H196 each coordinate Fe cation. R205 contacts 2-oxoglutarate.

Interacts with ADRB2; the interaction hydroxylates ADRB2 facilitating its ubiquitination by the VHL-E3 ligase complex. Interacts with PAX2; the interaction targets PAX2 for destruction. Interacts with PKM; the interaction hydroxylates PKM in hypoxia. Interacts with WDR83; the interaction leads to almost complete elimination of HIF-mediated reporter activity. Interacts with BCL2 (via its BH4 domain); the interaction disrupts the BAX-BCL4 complex inhibiting the anti-apoptotic activity of BCL2. It depends on Fe(2+) as a cofactor. Requires L-ascorbate as cofactor. Post-translationally, ubiquitinated by SIAH1 and/or SIAH2 in response to the unfolded protein response (UPR), leading to its degradation. Highly expressed in vascular smooth muscle. Moderately expressed in esophagus, stomach, small bowel and aorta. Low levels in tail and kidney. Expression also in pheochromocytoma cell line PC-12.

It is found in the nucleus. The protein localises to the cytoplasm. It carries out the reaction L-prolyl-[protein] + 2-oxoglutarate + O2 = trans-4-hydroxy-L-prolyl-[protein] + succinate + CO2. The catalysed reaction is L-prolyl-[hypoxia-inducible factor alpha subunit] + 2-oxoglutarate + O2 = trans-4-hydroxy-L-prolyl-[hypoxia-inducible factor alpha subunit] + succinate + CO2. In terms of biological role, prolyl hydroxylase that mediates hydroxylation of proline residues in target proteins, such as PKM, TELO2, ATF4 and HIF1A. Target proteins are preferentially recognized via a LXXLAP motif. Cellular oxygen sensor that catalyzes, under normoxic conditions, the post-translational formation of 4-hydroxyproline in hypoxia-inducible factor (HIF) alpha proteins. Hydroxylates a specific proline found in each of the oxygen-dependent degradation (ODD) domains (N-terminal, NODD, and C-terminal, CODD) of HIF1A. Also hydroxylates HIF2A. Has a preference for the CODD site for both HIF1A and HIF2A. Hydroxylation on the NODD site by EGLN3 appears to require prior hydroxylation on the CODD site. Hydroxylated HIFs are then targeted for proteasomal degradation via the von Hippel-Lindau ubiquitination complex. Under hypoxic conditions, the hydroxylation reaction is attenuated allowing HIFs to escape degradation resulting in their translocation to the nucleus, heterodimerization with HIF1B, and increased expression of hypoxy-inducible genes. ELGN3 is the most important isozyme in limiting physiological activation of HIFs (particularly HIF2A) in hypoxia. Also hydroxylates PKM in hypoxia, limiting glycolysis. Under normoxia, hydroxylates and regulates the stability of ADRB2. Regulator of cardiomyocyte and neuronal apoptosis. In cardiomyocytes, inhibits the anti-apoptotic effect of BCL2 by disrupting the BAX-BCL2 complex. In neurons, has a NGF-induced proapoptotic effect, probably through regulating CASP3 activity. Also essential for hypoxic regulation of neutrophilic inflammation. Plays a crucial role in DNA damage response (DDR) by hydroxylating TELO2, promoting its interaction with ATR which is required for activation of the ATR/CHK1/p53 pathway. Also mediates hydroxylation of ATF4, leading to decreased protein stability of ATF4. The sequence is that of Prolyl hydroxylase EGLN3 (Egln3) from Rattus norvegicus (Rat).